The primary structure comprises 275 residues: Rhamnulose-1-phosphate aldolase (275 aa).

Glu-117 is a catalytic residue. Zn(2+) contacts are provided by His-141, His-143, and His-212.

It belongs to the aldolase class II family. RhaD subfamily. In terms of assembly, homotetramer. Zn(2+) is required as a cofactor.

It is found in the cytoplasm. It catalyses the reaction L-rhamnulose 1-phosphate = (S)-lactaldehyde + dihydroxyacetone phosphate. The protein operates within carbohydrate degradation; L-rhamnose degradation; glycerone phosphate from L-rhamnose: step 3/3. In terms of biological role, catalyzes the reversible cleavage of L-rhamnulose-1-phosphate to dihydroxyacetone phosphate (DHAP) and L-lactaldehyde. This chain is Rhamnulose-1-phosphate aldolase, found in Salmonella dublin (strain CT_02021853).